Reading from the N-terminus, the 273-residue chain is 4-hydroxy-tetrahydrodipicolinate reductase (273 aa).

Residues 8–13 (GALGRM), Asp-35, 103–105 (GTT), and 129–132 (SQNY) contribute to the NAD(+) site. Catalysis depends on His-161, which acts as the Proton donor/acceptor. (S)-2,3,4,5-tetrahydrodipicolinate is bound at residue His-162. The active-site Proton donor is the Lys-165. 171–172 (GT) is a binding site for (S)-2,3,4,5-tetrahydrodipicolinate.

It belongs to the DapB family.

The protein localises to the cytoplasm. It catalyses the reaction (S)-2,3,4,5-tetrahydrodipicolinate + NAD(+) + H2O = (2S,4S)-4-hydroxy-2,3,4,5-tetrahydrodipicolinate + NADH + H(+). It carries out the reaction (S)-2,3,4,5-tetrahydrodipicolinate + NADP(+) + H2O = (2S,4S)-4-hydroxy-2,3,4,5-tetrahydrodipicolinate + NADPH + H(+). It functions in the pathway amino-acid biosynthesis; L-lysine biosynthesis via DAP pathway; (S)-tetrahydrodipicolinate from L-aspartate: step 4/4. Its function is as follows. Catalyzes the conversion of 4-hydroxy-tetrahydrodipicolinate (HTPA) to tetrahydrodipicolinate. This Methanococcus aeolicus (strain ATCC BAA-1280 / DSM 17508 / OCM 812 / Nankai-3) protein is 4-hydroxy-tetrahydrodipicolinate reductase.